The sequence spans 464 residues: Protein FAM90A15 (464 aa).

Disordered regions lie at residues 1 to 42 (MMAR…DPRL), 70 to 389 (PATL…HDGA), and 415 to 437 (HSPE…SEAP). Composition is skewed to basic and acidic residues over residues 74-89 (GKKE…KPRV) and 97-114 (NKDK…DPQR). Low complexity predominate over residues 180–197 (LASLSPLRKASLSSSSSL).

This sequence belongs to the FAM90 family.

This chain is Protein FAM90A15, found in Homo sapiens (Human).